The primary structure comprises 127 residues: Large ribosomal subunit protein bL19 (127 aa).

This sequence belongs to the bacterial ribosomal protein bL19 family.

This protein is located at the 30S-50S ribosomal subunit interface and may play a role in the structure and function of the aminoacyl-tRNA binding site. This Bradyrhizobium sp. (strain BTAi1 / ATCC BAA-1182) protein is Large ribosomal subunit protein bL19.